The following is a 136-amino-acid chain: Replication enhancer (136 aa).

It belongs to the geminiviridae replication enhancer protein family. In terms of assembly, homooligomer. Interacts with the replication-associated protein (REP). Interacts with host proliferating cell nuclear antigen (PCNA). Interacts with host retinoblastoma-related protein 1 (RBR1), and may thereby deregulate the host cell cycle. Oligomerization and interaction with PCNA are necessary for optimal replication enhancement.

Functionally, increases viral DNA accumulation. Enhances infectivity and symptom expression. This Beet curly top virus (strain California/Logan) (BCTV) protein is Replication enhancer.